We begin with the raw amino-acid sequence, 394 residues long: Elongation factor Tu (394 aa).

In terms of domain architecture, tr-type G spans 10–204 (KPHINVGTIG…FLDSYIPEPK (195 aa)). Residues 19 to 26 (GHVDHGKT) form a G1 region. Residue 19–26 (GHVDHGKT) participates in GTP binding. Residue Thr-26 participates in Mg(2+) binding. Residues 60–64 (GITIN) form a G2 region. Residues 81 to 84 (DCPG) form a G3 region. GTP-binding positions include 81-85 (DCPGH) and 136-139 (NKCD). The interval 136-139 (NKCD) is G4. Positions 174–176 (SAL) are G5.

Belongs to the TRAFAC class translation factor GTPase superfamily. Classic translation factor GTPase family. EF-Tu/EF-1A subfamily. Monomer.

Its subcellular location is the cytoplasm. The catalysed reaction is GTP + H2O = GDP + phosphate + H(+). GTP hydrolase that promotes the GTP-dependent binding of aminoacyl-tRNA to the A-site of ribosomes during protein biosynthesis. In Buchnera aphidicola subsp. Acyrthosiphon pisum (strain 5A), this protein is Elongation factor Tu.